The chain runs to 189 residues: Glycerol-3-phosphate acyltransferase (189 aa).

Transmembrane regions (helical) follow at residues 1 to 21 (MFWLLALLAYLLGSLSFAIVL), 50 to 70 (KLAILTLLGDLCKGLLPVLLA), 77 to 97 (LHAQAWVGICAVLGHLFPLYF), 111 to 131 (MLMALYFPAALLAIGAWLLTF), and 151 to 171 (LLAWREPEALLPISVLTVMIV).

This sequence belongs to the PlsY family. In terms of assembly, probably interacts with PlsX.

Its subcellular location is the cell inner membrane. It catalyses the reaction an acyl phosphate + sn-glycerol 3-phosphate = a 1-acyl-sn-glycero-3-phosphate + phosphate. Its pathway is lipid metabolism; phospholipid metabolism. Its function is as follows. Catalyzes the transfer of an acyl group from acyl-phosphate (acyl-PO(4)) to glycerol-3-phosphate (G3P) to form lysophosphatidic acid (LPA). This enzyme utilizes acyl-phosphate as fatty acyl donor, but not acyl-CoA or acyl-ACP. The chain is Glycerol-3-phosphate acyltransferase from Pseudomonas putida (strain ATCC 47054 / DSM 6125 / CFBP 8728 / NCIMB 11950 / KT2440).